The chain runs to 504 residues: Cytochrome P450 2D9 (504 aa).

Residue serine 249 is modified to Phosphoserine. Residue cysteine 446 participates in heme binding.

This sequence belongs to the cytochrome P450 family. Requires heme as cofactor.

The protein localises to the endoplasmic reticulum membrane. It localises to the microsome membrane. The enzyme catalyses an organic molecule + reduced [NADPH--hemoprotein reductase] + O2 = an alcohol + oxidized [NADPH--hemoprotein reductase] + H2O + H(+). Cytochromes P450 are a group of heme-thiolate monooxygenases. In liver microsomes, this enzyme is involved in an NADPH-dependent electron transport pathway. It oxidizes a variety of structurally unrelated compounds, including steroids, fatty acids, and xenobiotics. The protein is Cytochrome P450 2D9 (Cyp2d9) of Mus musculus (Mouse).